Consider the following 600-residue polypeptide: MDKKYIRNFSIVAHIDHGKSTLSDRIIEFTNTLTTREMKNQILDSMDIERERGITIKLNAVQLIYHNPKDNQDYYFHLIDTPGHVDFTYEVSRSLAACEGALLVVDASQGVEAQTLSNVYLALENNLEIVPVINKIDLPSADIDRVKKQVEDTIGLDCSNAPLVSAKTGLNINQIMEAIIEQIPPPLDSDDNKPLQALVFDSYYDAYKGAVCLVRIKNGQVKVGTKIRFMSNNETFIVSALGVNTPKIVNKEVLVAGEVGWIAASIKNIKSISVGDTITDDANPATTSLPGYKKILPMVYCGLYPIDSTQYELFKEALEKIYLSDSSLTYEYETSQALGFGIRCGFLGLLHMDVIRERLDREFNIALIATAPSVIYKVLLNDGTILEIDSAAKLPDKTLYKEIQEPFAKAEIIVPDDFLGNVMELCQNYRGEYLDLVNVDSTRKKVTYLIPLAEIMYSFFDKLKSCSKGYATLDYEILDYRKQDLVKVDILLNGNKVDALSTIMHREFASDRSRKICLKLKEHIPKHQFEIPIQAVIGGKIIARETVSAMRKNVLAKCYGGDITRKKKLLEQQKEGKKRLKAIGNVSVPHDTFVKILSEE.

The 184-residue stretch at 4–187 (KYIRNFSIVA…AIIEQIPPPL (184 aa)) folds into the tr-type G domain. GTP is bound by residues 16–21 (DHGKST) and 134–137 (NKID).

Belongs to the TRAFAC class translation factor GTPase superfamily. Classic translation factor GTPase family. LepA subfamily.

Its subcellular location is the cell membrane. It catalyses the reaction GTP + H2O = GDP + phosphate + H(+). Its function is as follows. Required for accurate and efficient protein synthesis under certain stress conditions. May act as a fidelity factor of the translation reaction, by catalyzing a one-codon backward translocation of tRNAs on improperly translocated ribosomes. Back-translocation proceeds from a post-translocation (POST) complex to a pre-translocation (PRE) complex, thus giving elongation factor G a second chance to translocate the tRNAs correctly. Binds to ribosomes in a GTP-dependent manner. In Malacoplasma penetrans (strain HF-2) (Mycoplasma penetrans), this protein is Elongation factor 4.